The following is a 280-amino-acid chain: uncharacterized protein (280 aa).

The region spanning 1 to 78 is the HTH rpiR-type domain; it reads MDVIQRIKEK…VLLAQSISRA (78 aa). Residues 37–57 constitute a DNA-binding region (H-T-H motif); sequence ISDLSEKAGVKSEASVVKFYK. The 141-residue stretch at 123–263 folds into the SIS domain; sequence TVDLFKNAQR…YTLLAARDPR (141 aa).

This is an uncharacterized protein from Thermotoga maritima (strain ATCC 43589 / DSM 3109 / JCM 10099 / NBRC 100826 / MSB8).